We begin with the raw amino-acid sequence, 731 residues long: MSHADQLARTHLAPDPADLSRLVAGTHHDPHGILGAHEYGDHTVIRAFRPHATEVAALVGGDRFAMQHIESGLFAVALPFTNLIDYRLQITYPDSEPYVVADAYRFLPTLGEVDLHLFGEGRHERLWEVLGAHPRSFTTADGVVTGVSFAVWAPNAKGISLIGEFNGWTGTEAPMRVLGSSGVWELFWPDFPIGGLYKFKVHGADGVVTERADPMAFATEVPPHTASRVTLSSYTWGDADWMTQRAARNPVFEPMSTYEVHLGSWRPGLSYRQLARELTDYVVEHGFTHVELLPVAEHPFAGSWGYQVTSYYAPTSRFGTPDEFRALVDALHQAGIGVIVDWVPAHFPKDAWALGRFDGTPLYEHSDPKRGEQLDWGTYVFDFGRREVRNFLVANALYWLQEFHIDGLRVDAVASMLYLDYSRPEGGWTPNIYGGRENLEAVQFLQEMNATAHKSAPGIVTIAEESTSWPGVTRPTNLGGLGFSMKWNMGWMHDTLDYISRDPIYRSYHHHEMTFSMLYAFSENYVLPLSHDEVVHGKGTLWGRMPGNNHVKAAGLRSLLAYQWAHPGKQLLFMGQEFGQRAEWSEERGLDWWQLDEQGFSNGILRLVRDINDIYRSHPALWSQDTVPDGYSWIDANDSANNVLSFLRYGKDGSVMACVFNFAGAEHSGYRLGLPSAGRWREVLNTDATVYNGSGIGNMGGVDATEDPWHGRPASAVLVLPPTSALWLEPK.

Residue D411 is the Nucleophile of the active site. The active-site Proton donor is E464.

Belongs to the glycosyl hydrolase 13 family. GlgB subfamily. As to quaternary structure, monomer.

It catalyses the reaction Transfers a segment of a (1-&gt;4)-alpha-D-glucan chain to a primary hydroxy group in a similar glucan chain.. It participates in glycan biosynthesis; glycogen biosynthesis. In terms of biological role, catalyzes the formation of the alpha-1,6-glucosidic linkages in glycogen by scission of a 1,4-alpha-linked oligosaccharide from growing alpha-1,4-glucan chains and the subsequent attachment of the oligosaccharide to the alpha-1,6 position. The chain is 1,4-alpha-glucan branching enzyme GlgB from Mycolicibacterium paratuberculosis (strain ATCC BAA-968 / K-10) (Mycobacterium paratuberculosis).